A 758-amino-acid polypeptide reads, in one-letter code: Spastin (758 aa).

Residues 1–103 form a disordered region; sequence MVRTKNQSSS…SPRSGHHHSY (103 aa). At 1-121 the chain is on the cytoplasmic side; the sequence is MVRTKNQSSS…KQNLYVVSFP (121 aa). The interval 1–210 is required for localization to punctate cytoplasmic foci; it reads MVRTKNQSSS…RPIQPLEMAA (210 aa). Composition is skewed to low complexity over residues 8–28, 43–58, 66–76, and 85–95; these read SSSS…SSGA, RSSS…AGGS, SSNRRSPGSSP, and TDDLTPTTCSP. An intramembrane region (helical) is located at residues 122–142; sequence IIFLFNVLRSLIYQLFCIFRY. At 143–758 the chain is on the cytoplasmic side; the sequence is LYGASTKVIY…WSQDYGDITI (616 aa). Polar residues-rich tracts occupy residues 169–180 and 189–198; these read SKEQQQSLNHPS and QEQQLSNQPQ. Positions 169 to 202 are disordered; sequence SKEQQQSLNHPSELNREGDGQEQQLSNQPQRFRP. Residues 208–758 are sufficient for interaction with microtubules and microtubule severing; it reads MAANRPGGGY…WSQDYGDITI (551 aa). One can recognise an MIT domain in the interval 233–308; that stretch reads HRRAFEYISK…SMARDRLHFL (76 aa). Residues 323-339 are compositionally biased toward basic and acidic residues; the sequence is KEKQKEEARSKPQKSRE. A disordered region spans residues 323 to 454; sequence KEKQKEEARS…GPSGSGASTP (132 aa). 2 stretches are compositionally biased toward polar residues: residues 390–406 and 425–454; these read NKSQ…TSVG and QFSS…ASTP. Positions 443 to 455 are required for interaction with microtubules; it reads NNGPSGSGASTPV. 523-530 provides a ligand contact to ATP; sequence GPPGNGKT.

It belongs to the AAA ATPase family. Spastin subfamily. In terms of assembly, homohexamer. The homohexamer is stabilized by ATP-binding. The homohexamer may adopt a ring conformation through which microtubules pass prior to being severed. Interacts with microtubules. Interacts with atl; may be involved in microtubule dynamics.

The protein resides in the membrane. It is found in the cytoplasm. It localises to the cytoskeleton. Its subcellular location is the microtubule organizing center. The protein localises to the centrosome. The protein resides in the chromosome. It is found in the lipid droplet. It carries out the reaction n ATP + n H2O + a microtubule = n ADP + n phosphate + (n+1) alpha/beta tubulin heterodimers.. In terms of biological role, ATP-dependent microtubule severing protein. Stimulates microtubule minus-end depolymerization and poleward microtubule flux in the mitotic spindle. Regulates microtubule stability in the neuromuscular junction synapse. Involved in lipid metabolism by regulating the size and distribution of lipid droplets. Involved in axon regeneration by regulating microtubule severing. In Drosophila simulans (Fruit fly), this protein is Spastin.